A 360-amino-acid chain; its full sequence is Phospho-N-acetylmuramoyl-pentapeptide-transferase (360 aa).

A run of 10 helical transmembrane segments spans residues 21–41 (YITFRSIMALLTALIIGLWIG), 73–93 (TMGGIMILFAIGVSTLLWADL), 98–118 (VWFVLFILFGYGVVGFVDDYW), 132–152 (WKYFWLSVIALVSAFGMYAIG), 168–188 (VMPQLGLFYIVLTYFVIVGTS), 199–219 (GLAIVPLIMVAGAFALIAWAT), 236–256 (SGELVILCTAIVGAGLGFLWF), 263–283 (VFMGDVGSLSLGGALGVIAVL), 288–308 (LLLVVMGGVFVVEALSVILQV), and 338–358 (VIVRFWIITLMLVLIGLVTLK).

Belongs to the glycosyltransferase 4 family. MraY subfamily. The cofactor is Mg(2+).

Its subcellular location is the cell inner membrane. The enzyme catalyses UDP-N-acetyl-alpha-D-muramoyl-L-alanyl-gamma-D-glutamyl-meso-2,6-diaminopimeloyl-D-alanyl-D-alanine + di-trans,octa-cis-undecaprenyl phosphate = di-trans,octa-cis-undecaprenyl diphospho-N-acetyl-alpha-D-muramoyl-L-alanyl-D-glutamyl-meso-2,6-diaminopimeloyl-D-alanyl-D-alanine + UMP. Its pathway is cell wall biogenesis; peptidoglycan biosynthesis. Its function is as follows. Catalyzes the initial step of the lipid cycle reactions in the biosynthesis of the cell wall peptidoglycan: transfers peptidoglycan precursor phospho-MurNAc-pentapeptide from UDP-MurNAc-pentapeptide onto the lipid carrier undecaprenyl phosphate, yielding undecaprenyl-pyrophosphoryl-MurNAc-pentapeptide, known as lipid I. The chain is Phospho-N-acetylmuramoyl-pentapeptide-transferase from Glaesserella parasuis serovar 5 (strain SH0165) (Haemophilus parasuis).